Reading from the N-terminus, the 311-residue chain is Ribosomal RNA large subunit methyltransferase F (311 aa).

This sequence belongs to the methyltransferase superfamily. METTL16/RlmF family.

The protein localises to the cytoplasm. The catalysed reaction is adenosine(1618) in 23S rRNA + S-adenosyl-L-methionine = N(6)-methyladenosine(1618) in 23S rRNA + S-adenosyl-L-homocysteine + H(+). Functionally, specifically methylates the adenine in position 1618 of 23S rRNA. This is Ribosomal RNA large subunit methyltransferase F from Pectobacterium atrosepticum (strain SCRI 1043 / ATCC BAA-672) (Erwinia carotovora subsp. atroseptica).